The following is a 588-amino-acid chain: Calicin (588 aa).

The 71-residue stretch at 28-98 folds into the BTB domain; the sequence is WDMALTVDHH…FYSGKVVISE (71 aa). Residues 133–235 enclose the BACK domain; it reads CLRYLFLAEL…NAVSNKTLMF (103 aa). Ser-149 is subject to Phosphoserine. 6 Kelch repeats span residues 280–327, 328–375, 377–423, 425–475, 476–525, and 526–580; these read SVVI…AAGR, YIYI…TCGG, VYSV…TKGD, NLYI…SFHQ, DNIL…IGDS, and KVFV…LAKL.

In terms of assembly, interacts with CYLC1; the interaction may be relevant for proper acrosome attachment to the nuclear envelope. Expressed in testis and in spermatozoa.

It is found in the cytoplasm. The protein localises to the cytoskeleton. Its subcellular location is the perinuclear theca. It localises to the calyx. Its function is as follows. Required for both nuclear and acrosomal shaping during spermiogenesis. The chain is Calicin (Ccin) from Mus musculus (Mouse).